Consider the following 316-residue polypeptide: Mannose-6-phosphate isomerase (316 aa).

Positions 95, 97, 114, and 171 each coordinate Zn(2+). Residue arginine 191 is part of the active site.

This sequence belongs to the mannose-6-phosphate isomerase type 1 family. Requires Zn(2+) as cofactor.

The enzyme catalyses D-mannose 6-phosphate = D-fructose 6-phosphate. The polypeptide is Mannose-6-phosphate isomerase (pmi) (Streptococcus mutans serotype c (strain ATCC 700610 / UA159)).